Reading from the N-terminus, the 377-residue chain is Stimulator of interferon genes protein 7 (377 aa).

A run of 4 helical transmembrane segments spans residues 30–50 (TAAI…FLAV), 57–77 (THFL…GELL), 106–126 (FTFD…LILC), and 141–161 (FAIL…LVGL).

Belongs to the STING family.

Its subcellular location is the membrane. Functionally, facilitator of innate immune signaling that acts as a sensor of second messenger signals produced by cyclic GMP-AMP synthase-like receptors (cGLRs) and promotes the production of type I interferon. Innate immune response is triggered in response to nucleotides from viruses and bacteria delivered to the cytoplasm. Acts by binding cyclic dinucleotides: recognizes and binds a large variety of 2'-3'- and 3'-3' linked cyclic dinucleotides (2'-3'-cGAMP, 3'-3'-cGAMP, 2',3'-cUAMP, 3',3'-cUAMP and/or 3',3'-c-di-GMP) second messengers produced by cGLRs in response to nucleotides in the cytosol, such as double-stranded RNA (dsRNA). Upon binding to cyclic dinucleotides, oligomerizes and promotes the recruitment and subsequent activation of the transcription factor IRF3 to induce expression of type I interferon. This chain is Stimulator of interferon genes protein 7, found in Stylophora pistillata (Smooth cauliflower coral).